A 213-amino-acid chain; its full sequence is Thiopurine S-methyltransferase (213 aa).

S-adenosyl-L-methionine contacts are provided by W10, L45, E66, and R121.

The protein belongs to the class I-like SAM-binding methyltransferase superfamily. TPMT family.

The protein resides in the cytoplasm. The catalysed reaction is S-adenosyl-L-methionine + a thiopurine = S-adenosyl-L-homocysteine + a thiopurine S-methylether.. In Aliivibrio salmonicida (strain LFI1238) (Vibrio salmonicida (strain LFI1238)), this protein is Thiopurine S-methyltransferase.